Consider the following 192-residue polypeptide: Ion-translocating oxidoreductase complex subunit A (192 aa).

Helical transmembrane passes span 5-25 (LLLL…FLGL), 39-59 (IGMS…SYLV), 72-92 (LRTM…EMLV), 102-122 (ALGI…VALL), 134-154 (AIYG…FSAM), and 171-191 (AIAM…TGLV).

The protein belongs to the NqrDE/RnfAE family. In terms of assembly, the complex is composed of six subunits: RnfA, RnfB, RnfC, RnfD, RnfE and RnfG.

It localises to the cell inner membrane. Part of a membrane-bound complex that couples electron transfer with translocation of ions across the membrane. The sequence is that of Ion-translocating oxidoreductase complex subunit A from Shewanella loihica (strain ATCC BAA-1088 / PV-4).